The primary structure comprises 124 residues: UPF0738 protein GWCH70_0774 (124 aa).

The protein belongs to the UPF0738 family.

This is UPF0738 protein GWCH70_0774 from Geobacillus sp. (strain WCH70).